A 185-amino-acid polypeptide reads, in one-letter code: Large ribosomal subunit protein uL5 (185 aa).

This sequence belongs to the universal ribosomal protein uL5 family. In terms of assembly, part of the 50S ribosomal subunit; part of the 5S rRNA/L5/L18/L25 subcomplex. Contacts the 5S rRNA and the P site tRNA. Forms a bridge to the 30S subunit in the 70S ribosome.

Its function is as follows. This is one of the proteins that bind and probably mediate the attachment of the 5S RNA into the large ribosomal subunit, where it forms part of the central protuberance. In the 70S ribosome it contacts protein S13 of the 30S subunit (bridge B1b), connecting the 2 subunits; this bridge is implicated in subunit movement. Contacts the P site tRNA; the 5S rRNA and some of its associated proteins might help stabilize positioning of ribosome-bound tRNAs. The chain is Large ribosomal subunit protein uL5 from Bacteroides fragilis (strain ATCC 25285 / DSM 2151 / CCUG 4856 / JCM 11019 / LMG 10263 / NCTC 9343 / Onslow / VPI 2553 / EN-2).